The following is a 304-amino-acid chain: Elongation factor Ts (304 aa).

Residues 79–82 form an involved in Mg(2+) ion dislocation from EF-Tu region; that stretch reads TDFV.

Belongs to the EF-Ts family.

It localises to the cytoplasm. Functionally, associates with the EF-Tu.GDP complex and induces the exchange of GDP to GTP. It remains bound to the aminoacyl-tRNA.EF-Tu.GTP complex up to the GTP hydrolysis stage on the ribosome. The polypeptide is Elongation factor Ts (Polaromonas sp. (strain JS666 / ATCC BAA-500)).